A 159-amino-acid polypeptide reads, in one-letter code: Sumo-conjugating enzyme ubc9 (159 aa).

The 154-residue stretch at 4 to 157 (ISSARLSEER…VKAQSKVYPP (154 aa)) folds into the UBC core domain. The active-site Glycyl thioester intermediate is cysteine 93.

Belongs to the ubiquitin-conjugating enzyme family.

The protein resides in the nucleus. It participates in protein modification; protein sumoylation. Its function is as follows. Accepts the ubiquitin-like protein sumo from the E1 complex and catalyzes its covalent attachment to other proteins with the help of an E3 ligase. This Dictyostelium discoideum (Social amoeba) protein is Sumo-conjugating enzyme ubc9 (ubc9).